The primary structure comprises 357 residues: GTPase Obg (357 aa).

The 159-residue stretch at 1-159 (MKFVDEAEIQ…RTLKLELKLL (159 aa)) folds into the Obg domain. One can recognise an OBG-type G domain in the interval 160–343 (ADIGMLGFPN…IMKSAMTLFE (184 aa)). GTP is bound by residues 166–173 (GFPNVGKS), 191–195 (FTTLY), 213–216 (DVPG), 293–296 (NKAD), and 324–326 (SAV). Mg(2+)-binding residues include serine 173 and threonine 193.

The protein belongs to the TRAFAC class OBG-HflX-like GTPase superfamily. OBG GTPase family. Monomer. The cofactor is Mg(2+).

Its subcellular location is the cytoplasm. Functionally, an essential GTPase which binds GTP, GDP and possibly (p)ppGpp with moderate affinity, with high nucleotide exchange rates and a fairly low GTP hydrolysis rate. Plays a role in control of the cell cycle, stress response, ribosome biogenesis and in those bacteria that undergo differentiation, in morphogenesis control. The protein is GTPase Obg of Xylella fastidiosa (strain M12).